The sequence spans 362 residues: Poly(rC)-binding protein 2 (362 aa).

2 consecutive KH domains span residues 13 to 75 (TLTI…FAMI) and 97 to 162 (PVTL…VKQI). Lysine 115 is covalently cross-linked (Glycyl lysine isopeptide (Lys-Gly) (interchain with G-Cter in SUMO2)). Serine 169 carries the post-translational modification Phosphoserine. Lysine 181 is covalently cross-linked (Glycyl lysine isopeptide (Lys-Gly) (interchain with G-Cter in SUMO2)). 2 positions are modified to phosphoserine: serine 185 and serine 268. Positions 284-348 (TTSHELTIPN…ASISLAQYLI (65 aa)) constitute a KH 3 domain. Lysine 319 is covalently cross-linked (Glycyl lysine isopeptide (Lys-Gly) (interchain with G-Cter in SUMO2)). Serine 361 and serine 362 each carry phosphoserine.

In terms of assembly, identified in a mRNP complex, at least composed of DHX9, DDX3X, ELAVL1, HNRNPU, IGF2BP1, ILF3, PABPC1, PCBP2, PTBP2, STAU1, STAU2, SYNCRIP and YBX1. Interacts with IFIH1 and RNF135. Interacts with MAVS (via C-terminus) and ITCH (via WW domains). Interacts with CGAS; preventing the formation of liquid-like droplets in which CGAS is activated. Post-translationally, phosphorylated. The non-phosphorylated form(s) exhibited the strongest poly(rC)-binding activity.

It localises to the nucleus. The protein resides in the cytoplasm. In terms of biological role, single-stranded nucleic acid binding protein that binds preferentially to oligo dC. Major cellular poly(rC)-binding protein. Also binds poly(rU). Acts as a negative regulator of antiviral signaling. Negatively regulates cellular antiviral responses mediated by MAVS signaling. It acts as an adapter between MAVS and the E3 ubiquitin ligase ITCH, therefore triggering MAVS ubiquitination and degradation. Negativeley regulates the cGAS-STING pathway via interaction with CGAS, preventing the formation of liquid-like droplets in which CGAS is activated. Together with PCBP1, required for erythropoiesis, possibly by regulating mRNA splicing. The sequence is that of Poly(rC)-binding protein 2 (Pcbp2) from Mus musculus (Mouse).